The primary structure comprises 255 residues: Uracil-DNA glycosylase (255 aa).

The Proton acceptor role is filled by aspartate 90.

Belongs to the uracil-DNA glycosylase (UDG) superfamily. UNG family.

It is found in the host nucleus. The catalysed reaction is Hydrolyzes single-stranded DNA or mismatched double-stranded DNA and polynucleotides, releasing free uracil.. In terms of biological role, excises uracil residues from the DNA which can arise as a result of misincorporation of dUMP residues by DNA polymerase or deamination of cytosines. Therefore may reduce deleterious uracil incorporation into the viral genome, particularly in terminally differentiated cells which lack DNA repair enzymes. The chain is Uracil-DNA glycosylase from Equine herpesvirus 2 (strain 86/87) (EHV-2).